The primary structure comprises 687 residues: MSYIQFESGREKDKARQELREAREAMLQQAKERAELRGQRERQKELRGEADWMLPALAKKLEKPAKKSKKNVSKHKSRSKSKSSKKSRKHRNSSSSSESSTSSSSSFSEDEKERKRRKKKSKRSRKESASEDEWVEAPPPLAADNVTKKEPPQRDDWMTSESLLLKTFSRERKEPAKPNEKAQQIDAYDPAKSGRELNPYWKSNGTGLPGFQKPQDDDERQAKPHSSSSAQGSSRGWRKPGAKAPSPPRRSRSRSKSATSSDEEEEEAVQQPKSRPSCLTDEQINELAGKAIKAELKGKKELAAELNQQLEAARKERAEFIASGESVRNANTRPAKSKASAEHVLLTKVDQSGNVRPLVQSGDPNESYGGRMGPKRGSKKVDTHVDGQRVRYFADDDRYDIKQMFEREKHATAAEVNLQYADIVSKHKNPNDDLDDIFADKVRKQISASDAEKREMQSAIREHEKLVATLDNCERCFDSAKLDKQLLVSLGDKIYLSLPWYMGLQSGHCILTTLQHVPCCTQLDEDAWEEISNFRKALTRMFAARRQDVVFYEIANKLHRRPHLSVHCIPIPASQGEMAPFYFKKAIEESEQEWCINKQLVSLRQKSLRAAIPKGLPYVWVHFGMDSGFAHVIEDEDRFPANFAQEILGGMLELNPNAWRKPRKEANPIGKVKSFAENWKKFDCTQN.

A coiled-coil region spans residues 6–51 (FESGREKDKARQELREAREAMLQQAKERAELRGQRERQKELRGEAD). A compositionally biased stretch (basic and acidic residues) spans 24 to 50 (EAMLQQAKERAELRGQRERQKELRGEA). A disordered region spans residues 24–281 (EAMLQQAKER…PKSRPSCLTD (258 aa)). A compositionally biased stretch (basic residues) spans 66–92 (KKSKKNVSKHKSRSKSKSSKKSRKHRN). Over residues 93–107 (SSSSSESSTSSSSSF) the composition is skewed to low complexity. Positions 108–131 (SEDEKERKRRKKKSKRSRKESASE) form a coiled coil. The span at 114–125 (RKRRKKKSKRSR) shows a compositional bias: basic residues. Phosphoserine is present on residues S128 and S130. Basic and acidic residues-rich tracts occupy residues 146–157 (VTKKEPPQRDDW) and 168–180 (FSRERKEPAKPNE). Residues 290 to 325 (KAIKAELKGKKELAAELNQQLEAARKERAEFIASGE) are a coiled coil. The disordered stretch occupies residues 355–383 (VRPLVQSGDPNESYGGRMGPKRGSKKVDT). A coiled-coil region spans residues 444-475 (KQISASDAEKREMQSAIREHEKLVATLDNCER).

The protein belongs to the CWF19 family.

This Drosophila melanogaster (Fruit fly) protein is CWF19-like protein 2 homolog.